A 325-amino-acid polypeptide reads, in one-letter code: Probable isoaspartyl peptidase/L-asparaginase 2 (325 aa).

T195 acts as the Nucleophile in catalysis. Residues 223–226 (RIGD) and 245–248 (TGEG) contribute to the substrate site.

The protein belongs to the Ntn-hydrolase family. Heterotetramer of two alpha and two beta chains arranged as a dimer of alpha/beta heterodimers. Cleaved into an alpha and beta chain by autocatalysis; this activates the enzyme. The N-terminal residue of the beta subunit is responsible for the nucleophile hydrolase activity.

The catalysed reaction is Cleavage of a beta-linked Asp residue from the N-terminus of a polypeptide.. Its function is as follows. Acts in asparagine catabolism and also in the final steps of protein degradation via hydrolysis of a range of isoaspartyl dipeptides. This is Probable isoaspartyl peptidase/L-asparaginase 2 from Arabidopsis thaliana (Mouse-ear cress).